Here is a 118-residue protein sequence, read N- to C-terminus: Ribonuclease P protein component 4 (118 aa).

Zn(2+) is bound by residues Cys-59, Cys-62, Cys-85, and Cys-88.

Belongs to the eukaryotic/archaeal RNase P protein component 4 family. Consists of a catalytic RNA component and at least 4-5 protein subunits. The cofactor is Zn(2+).

The protein resides in the cytoplasm. It carries out the reaction Endonucleolytic cleavage of RNA, removing 5'-extranucleotides from tRNA precursor.. Its function is as follows. Part of ribonuclease P, a protein complex that generates mature tRNA molecules by cleaving their 5'-ends. The polypeptide is Ribonuclease P protein component 4 (Sulfolobus acidocaldarius (strain ATCC 33909 / DSM 639 / JCM 8929 / NBRC 15157 / NCIMB 11770)).